The following is a 142-amino-acid chain: Large ribosomal subunit protein bL17 (142 aa).

It belongs to the bacterial ribosomal protein bL17 family. In terms of assembly, part of the 50S ribosomal subunit. Contacts protein L32.

The protein is Large ribosomal subunit protein bL17 of Bartonella henselae (strain ATCC 49882 / DSM 28221 / CCUG 30454 / Houston 1) (Rochalimaea henselae).